A 284-amino-acid polypeptide reads, in one-letter code: NAD kinase (284 aa).

Catalysis depends on D70, which acts as the Proton acceptor. NAD(+) is bound by residues D70–G71, N139–E140, K167, D169, L177, T180–S185, and Q236.

Belongs to the NAD kinase family. A divalent metal cation serves as cofactor.

Its subcellular location is the cytoplasm. The catalysed reaction is NAD(+) + ATP = ADP + NADP(+) + H(+). In terms of biological role, involved in the regulation of the intracellular balance of NAD and NADP, and is a key enzyme in the biosynthesis of NADP. Catalyzes specifically the phosphorylation on 2'-hydroxyl of the adenosine moiety of NAD to yield NADP. This chain is NAD kinase, found in Helicobacter pylori (strain HPAG1).